The primary structure comprises 195 residues: Holliday junction branch migration complex subunit RuvA (195 aa).

Positions 1–63 (MIASVRGEVL…EDSQTLYGFA (63 aa)) are domain I. A domain II region spans residues 64–138 (DSDARDLFLT…DKVGSSTSSG (75 aa)). A flexible linker region spans residues 138-142 (GVAAA). The interval 143-195 (GGHGIRGPVVEALVGLGFAVKQAEEATDKVLANDPEATTSSALRAALSMLGKK) is domain III.

It belongs to the RuvA family. Homotetramer. Forms an RuvA(8)-RuvB(12)-Holliday junction (HJ) complex. HJ DNA is sandwiched between 2 RuvA tetramers; dsDNA enters through RuvA and exits via RuvB. An RuvB hexamer assembles on each DNA strand where it exits the tetramer. Each RuvB hexamer is contacted by two RuvA subunits (via domain III) on 2 adjacent RuvB subunits; this complex drives branch migration. In the full resolvosome a probable DNA-RuvA(4)-RuvB(12)-RuvC(2) complex forms which resolves the HJ.

The protein localises to the cytoplasm. In terms of biological role, the RuvA-RuvB-RuvC complex processes Holliday junction (HJ) DNA during genetic recombination and DNA repair, while the RuvA-RuvB complex plays an important role in the rescue of blocked DNA replication forks via replication fork reversal (RFR). RuvA specifically binds to HJ cruciform DNA, conferring on it an open structure. The RuvB hexamer acts as an ATP-dependent pump, pulling dsDNA into and through the RuvAB complex. HJ branch migration allows RuvC to scan DNA until it finds its consensus sequence, where it cleaves and resolves the cruciform DNA. This is Holliday junction branch migration complex subunit RuvA from Mycolicibacterium gilvum (strain PYR-GCK) (Mycobacterium gilvum (strain PYR-GCK)).